Reading from the N-terminus, the 273-residue chain is Shikimate dehydrogenase (NADP(+)) (273 aa).

Shikimate is bound by residues 18-20 (SKS) and Thr65. Lys69 functions as the Proton acceptor in the catalytic mechanism. An NADP(+)-binding site is contributed by Glu81. Residues Asn90 and Asp105 each contribute to the shikimate site. Residues 130–134 (GAGGA), 154–159 (NRTHSK), and Met217 each bind NADP(+). Tyr219 contacts shikimate. Gly240 serves as a coordination point for NADP(+).

Belongs to the shikimate dehydrogenase family. As to quaternary structure, homodimer.

It catalyses the reaction shikimate + NADP(+) = 3-dehydroshikimate + NADPH + H(+). Its pathway is metabolic intermediate biosynthesis; chorismate biosynthesis; chorismate from D-erythrose 4-phosphate and phosphoenolpyruvate: step 4/7. Involved in the biosynthesis of the chorismate, which leads to the biosynthesis of aromatic amino acids. Catalyzes the reversible NADPH linked reduction of 3-dehydroshikimate (DHSA) to yield shikimate (SA). This chain is Shikimate dehydrogenase (NADP(+)), found in Herminiimonas arsenicoxydans.